The chain runs to 466 residues: Methylenetetrahydrofolate--tRNA-(uracil-5-)-methyltransferase TrmFO (466 aa).

14–19 lines the FAD pocket; the sequence is GGGLAG.

This sequence belongs to the MnmG family. TrmFO subfamily. FAD is required as a cofactor.

Its subcellular location is the cytoplasm. It carries out the reaction uridine(54) in tRNA + (6R)-5,10-methylene-5,6,7,8-tetrahydrofolate + NADH + H(+) = 5-methyluridine(54) in tRNA + (6S)-5,6,7,8-tetrahydrofolate + NAD(+). The catalysed reaction is uridine(54) in tRNA + (6R)-5,10-methylene-5,6,7,8-tetrahydrofolate + NADPH + H(+) = 5-methyluridine(54) in tRNA + (6S)-5,6,7,8-tetrahydrofolate + NADP(+). Catalyzes the folate-dependent formation of 5-methyl-uridine at position 54 (M-5-U54) in all tRNAs. This chain is Methylenetetrahydrofolate--tRNA-(uracil-5-)-methyltransferase TrmFO, found in Brucella suis (strain ATCC 23445 / NCTC 10510).